A 618-amino-acid chain; its full sequence is Structural protein ORF618 (618 aa).

Positions 570 to 598 form a coiled coil; sequence ILEAKRQIEDRAKGLSKNLDNTVTEIMNA.

It is found in the virion. The sequence is that of Structural protein ORF618 from Acidianus two-tailed virus (ATV).